Consider the following 1162-residue polypeptide: Enhanced level of genomic instability 1 (1162 aa).

7 disordered regions span residues 1 to 136 (MTDV…ADNQ), 144 to 163 (KAGKPENVGVSPVSTAKPKP), 179 to 202 (LGVNEGGAESPADQEIGSEAATPT), 249 to 319 (KTDA…TKKR), 348 to 380 (METPKRRTLRRKSQQETPIVAESTPSSRPRRSC), 611 to 634 (RSMEQNMAQNEEEAKPPPSAPNGE), and 666 to 697 (WSGNGGSNRNSQGMDDTFDMSNDSASMGSSSN). The segment covering 65–78 (KQKHREKHKRKREE) has biased composition (basic residues). A compositionally biased stretch (basic and acidic residues) spans 79 to 111 (KRRAALMEDQKSTTEEVKANAKEKPQPLREKSS). Polar residues predominate over residues 125 to 136 (PLKSSTPVADNQ). The segment covering 268–278 (KRLRGRPRSRR) has biased composition (basic residues). 2 stretches are compositionally biased toward low complexity: residues 666–676 (WSGNGGSNRNS) and 684–697 (DMSNDSASMGSSSN). 703–710 (GPSSSGKT) is an ATP binding site. Disordered regions lie at residues 900 to 923 (GDSTRDRTGGGIKSPTKTSNSRLA) and 975 to 1008 (QAAGGGSRTAAKRKSRSPKKAWLSSATGQKSDGH). A compositionally biased stretch (basic residues) spans 984-993 (AAKRKSRSPK). Polar residues predominate over residues 998-1008 (SSATGQKSDGH).

The protein belongs to the ELG1 family. In terms of assembly, component of a heteropentameric Elg1 RFC-like complex composed of one large subunit (elg1) and four small subunits (RfC4, RfC38, CG8142 and RfC3). As part of the complex, might interact with the Enok complex, composed of enok, Br140, Eaf6 and Ing5. Within the Enok complex, interacts directly with Br140. Expressed at higher levels in the germline nurse cells than in the somatic follicle cells.

It localises to the nucleus. Has an important role in DNA replication and in maintaining genome integrity during replication stress. Promotes PCNA deubiquitination. As component of the Elg1 RFC-like complex, regulates the functions of the DNA polymerase processivity factor PCNA by unloading it from DNA after replication during the S phase of the cell cycle. The PCNA-unloading might be regulated via interaction with the Enok acetyltransferase complex. Might have a role in restarting of stalled/regressed replication forks during replication stress. In the ovaries, has a role in nurse cell endoreplication. This chain is Enhanced level of genomic instability 1, found in Drosophila melanogaster (Fruit fly).